The chain runs to 90 residues: Large ribosomal subunit protein eL31 (90 aa).

This sequence belongs to the eukaryotic ribosomal protein eL31 family.

This is Large ribosomal subunit protein eL31 from Thermococcus gammatolerans (strain DSM 15229 / JCM 11827 / EJ3).